A 336-amino-acid chain; its full sequence is tRNA N6-adenosine threonylcarbamoyltransferase (336 aa).

The Fe cation site is built by His-114 and His-118. Substrate-binding positions include 136-140 (LVSGG), Asp-169, Gly-182, Asp-186, and Asn-275. Asp-301 is a Fe cation binding site.

The protein belongs to the KAE1 / TsaD family. Requires Fe(2+) as cofactor.

It is found in the cytoplasm. The enzyme catalyses L-threonylcarbamoyladenylate + adenosine(37) in tRNA = N(6)-L-threonylcarbamoyladenosine(37) in tRNA + AMP + H(+). Required for the formation of a threonylcarbamoyl group on adenosine at position 37 (t(6)A37) in tRNAs that read codons beginning with adenine. Is involved in the transfer of the threonylcarbamoyl moiety of threonylcarbamoyl-AMP (TC-AMP) to the N6 group of A37, together with TsaE and TsaB. TsaD likely plays a direct catalytic role in this reaction. The polypeptide is tRNA N6-adenosine threonylcarbamoyltransferase (Streptococcus pneumoniae (strain CGSP14)).